We begin with the raw amino-acid sequence, 1126 residues long: Probable serine/threonine-protein kinase DDB_G0280111 (1126 aa).

Residues 16–295 (LNFVKQIAEG…NLLRNQQPLF (280 aa)) form the Protein kinase domain. ATP contacts are provided by residues 22 to 30 (IAEGGFSYV) and lysine 45. Residue aspartate 147 is the Proton acceptor of the active site. Over residues 314 to 333 (NNNNNINNNNNNNIVNGKNI) the composition is skewed to low complexity. 4 disordered regions span residues 314 to 469 (NNNN…NGNN), 760 to 901 (LNLN…QQQQ), 944 to 1072 (TPSS…DEVR), and 1095 to 1126 (NKQSRMNNPNNLFDEGDSGFGDGEEEDEGLLN). Over residues 347 to 364 (TPTPPPPAPSQSPSPSPS) the composition is skewed to pro residues. Residues 367–390 (VVNNIENNSNGLEHSNSNGNISQP) show a composition bias toward polar residues. Composition is skewed to low complexity over residues 413–422 (PPNNSNNSFD), 432–469 (NLSNNPFNVNSNDNSNSSNNNNNNNNNNNNNNNNNGNN), and 760–795 (LNLNNNNNNNNNSNNSNNSNNSNSGNLSGNASLNSS). 2 stretches are compositionally biased toward polar residues: residues 796-825 (FDNINSSNPFSTEPTFNPFSATTTNTSESG) and 833-845 (EPTSNPSPRYQQS). The segment covering 846–856 (NNNNNNNNNNN) has biased composition (low complexity). The segment covering 857–866 (GTPISLTPGS) has biased composition (polar residues). Composition is skewed to low complexity over residues 886–901 (QQQQHPQQQQQQQQQQ), 953–971 (PSTGPTTAAQQQQQQQQSQ), and 1003–1035 (NVNINNNNNSHVSAPHSLNSSSSSISSISNPNL). A compositionally biased stretch (polar residues) spans 1095-1105 (NKQSRMNNPNN). The span at 1108-1126 (DEGDSGFGDGEEEDEGLLN) shows a compositional bias: acidic residues.

It belongs to the protein kinase superfamily. Ser/Thr protein kinase family.

It carries out the reaction L-seryl-[protein] + ATP = O-phospho-L-seryl-[protein] + ADP + H(+). The catalysed reaction is L-threonyl-[protein] + ATP = O-phospho-L-threonyl-[protein] + ADP + H(+). The polypeptide is Probable serine/threonine-protein kinase DDB_G0280111 (Dictyostelium discoideum (Social amoeba)).